The chain runs to 431 residues: Enolase (431 aa).

(2R)-2-phosphoglycerate is bound at residue Q164. The active-site Proton donor is the E206. Residues D243, E288, and D315 each contribute to the Mg(2+) site. Residues K340, R369, S370, and K391 each contribute to the (2R)-2-phosphoglycerate site. Catalysis depends on K340, which acts as the Proton acceptor.

Belongs to the enolase family. Mg(2+) serves as cofactor.

Its subcellular location is the cytoplasm. The protein resides in the secreted. The protein localises to the cell surface. The enzyme catalyses (2R)-2-phosphoglycerate = phosphoenolpyruvate + H2O. It participates in carbohydrate degradation; glycolysis; pyruvate from D-glyceraldehyde 3-phosphate: step 4/5. Functionally, catalyzes the reversible conversion of 2-phosphoglycerate (2-PG) into phosphoenolpyruvate (PEP). It is essential for the degradation of carbohydrates via glycolysis. This is Enolase from Fervidobacterium nodosum (strain ATCC 35602 / DSM 5306 / Rt17-B1).